The chain runs to 147 residues: Protein-export protein SecB (147 aa).

The protein belongs to the SecB family. Homotetramer, a dimer of dimers. One homotetramer interacts with 1 SecA dimer.

It localises to the cytoplasm. One of the proteins required for the normal export of preproteins out of the cell cytoplasm. It is a molecular chaperone that binds to a subset of precursor proteins, maintaining them in a translocation-competent state. It also specifically binds to its receptor SecA. This chain is Protein-export protein SecB, found in Neisseria meningitidis serogroup C (strain 053442).